Reading from the N-terminus, the 37-residue chain is Cytochrome b6-f complex subunit 5 (37 aa).

A helical membrane pass occupies residues 5–25 (SLFGIVLGLIPITLAGLFVTA).

Belongs to the PetG family. The 4 large subunits of the cytochrome b6-f complex are cytochrome b6, subunit IV (17 kDa polypeptide, PetD), cytochrome f and the Rieske protein, while the 4 small subunits are PetG, PetL, PetM and PetN. The complex functions as a dimer.

The protein localises to the plastid. Its subcellular location is the chloroplast thylakoid membrane. Its function is as follows. Component of the cytochrome b6-f complex, which mediates electron transfer between photosystem II (PSII) and photosystem I (PSI), cyclic electron flow around PSI, and state transitions. PetG is required for either the stability or assembly of the cytochrome b6-f complex. The chain is Cytochrome b6-f complex subunit 5 from Arabis hirsuta (Hairy rock-cress).